We begin with the raw amino-acid sequence, 204 residues long: Small ribosomal subunit protein uS7 (204 aa).

An N-acetylmethionine modification is found at methionine 1. Threonine 2 is subject to N-acetylthreonine; in 40S ribosomal protein S5, N-terminally processed. The residue at position 14 (threonine 14) is a Phosphothreonine. An N6-acetyllysine; alternate modification is found at lysine 47. Lysine 47 is covalently cross-linked (Glycyl lysine isopeptide (Lys-Gly) (interchain with G-Cter in SUMO2); alternate). Serine 142 is modified (phosphoserine).

Belongs to the universal ribosomal protein uS7 family. In terms of assembly, component of the small ribosomal subunit. Part of the small subunit (SSU) processome, composed of more than 70 proteins and the RNA chaperone small nucleolar RNA (snoRNA) U3.

It is found in the cytoplasm. The protein resides in the nucleus. It localises to the nucleolus. In terms of biological role, component of the small ribosomal subunit. The ribosome is a large ribonucleoprotein complex responsible for the synthesis of proteins in the cell. Part of the small subunit (SSU) processome, first precursor of the small eukaryotic ribosomal subunit. During the assembly of the SSU processome in the nucleolus, many ribosome biogenesis factors, an RNA chaperone and ribosomal proteins associate with the nascent pre-rRNA and work in concert to generate RNA folding, modifications, rearrangements and cleavage as well as targeted degradation of pre-ribosomal RNA by the RNA exosome. This chain is Small ribosomal subunit protein uS7 (Rps5), found in Rattus norvegicus (Rat).